The primary structure comprises 144 residues: SSTTVPATHTSSSSLGPEQYVSSQSNDKHTSDSHPTPTSAHEVTTEFSGRTHYPPEEDDRVQLVHEFSELVIALIIFGVMAGVIGTILFISYGSRRLIKKSESDVQPLPPPDAEVPLSSVEIEDPEETDELNSFTKPNQERNES.

A compositionally biased stretch (polar residues) spans 1–25 (SSTTVPATHTSSSSLGPEQYVSSQS). A disordered region spans residues 1–55 (SSTTVPATHTSSSSLGPEQYVSSQSNDKHTSDSHPTPTSAHEVTTEFSGRTHYPP). O-linked (GalNAc...) serine glycosylation is present at S2. 4 O-linked (GalNAc...) threonine glycosylation sites follow: T3, T4, T8, and T10. O-linked (GalNAc...) serine glycans are attached at residues S11, S12, S13, S14, S22, and S23. O-linked (GalNAc...) threonine glycans are attached at residues T30, T36, T38, T44, and T45. Over residues 33–48 (SHPTPTSAHEVTTEFS) the composition is skewed to polar residues. S48 carries O-linked (GalNAc...) serine glycosylation. Residue T51 is glycosylated (O-linked (GalNAc...) threonine). A helical transmembrane segment spans residues 70-92 (LVIALIIFGVMAGVIGTILFISY). The tract at residues 101–144 (SESDVQPLPPPDAEVPLSSVEIEDPEETDELNSFTKPNQERNES) is disordered. Position 118 is a phosphoserine (S118). Positions 121-130 (EIEDPEETDE) are enriched in acidic residues.

Belongs to the glycophorin-A family. In terms of assembly, homodimer. Component of the ankyrin-1 complex in the erythrocyte, composed of ANK1, RHCE, RHAG, SLC4A1, EPB42, GYPA, GYPB and AQP1. Interacts with SLC4A1; a GYPA monomer is bound at each end of the SLC4A1 dimer forming a heterotetramer.

The protein resides in the membrane. Functionally, component of the ankyrin-1 complex, a multiprotein complex involved in the stability and shape of the erythrocyte membrane. Glycophorin A is the major intrinsic membrane protein of the erythrocyte. The N-terminal glycosylated segment, which lies outside the erythrocyte membrane, has MN blood group receptors. Appears to be important for the function of SLC4A1 and is required for high activity of SLC4A1. May be involved in translocation of SLC4A1 to the plasma membrane. The chain is Glycophorin-A from Macaca fuscata fuscata (Japanese macaque).